Reading from the N-terminus, the 118-residue chain is Protein YoeF (118 aa).

The polypeptide is Protein YoeF (yoeF) (Escherichia coli (strain K12)).